Reading from the N-terminus, the 517-residue chain is 2,3-bisphosphoglycerate-independent phosphoglycerate mutase (517 aa).

Positions 12 and 62 each coordinate Mn(2+). S62 serves as the catalytic Phosphoserine intermediate. Substrate contacts are provided by residues H123, 153–154 (RD), R185, R191, 261–264 (RSDR), and K336. Mn(2+) is bound by residues D403, H407, D444, H445, and H463.

The protein belongs to the BPG-independent phosphoglycerate mutase family. In terms of assembly, monomer. The cofactor is Mn(2+).

It carries out the reaction (2R)-2-phosphoglycerate = (2R)-3-phosphoglycerate. Its pathway is carbohydrate degradation; glycolysis; pyruvate from D-glyceraldehyde 3-phosphate: step 3/5. Functionally, catalyzes the interconversion of 2-phosphoglycerate and 3-phosphoglycerate. This chain is 2,3-bisphosphoglycerate-independent phosphoglycerate mutase, found in Methylobacillus flagellatus (strain ATCC 51484 / DSM 6875 / VKM B-1610 / KT).